The primary structure comprises 224 residues: 4-aminobenzoate synthase (224 aa).

Residues glutamate 77, histidine 84, glutamate 138, histidine 169, aspartate 173, and histidine 176 each contribute to the Fe(2+) site.

It belongs to the CADD family. Homodimer. Fe(2+) serves as cofactor. The cofactor is Mn(2+).

In terms of biological role, involved in de novo para-aminobenzoate (PABA) biosynthesis. Acts as a self-sacrificing or 'suicide' enzyme that utilizes its own active site tyrosine residue(s) as the substrate for PABA synthesis. The side chain of the tyrosine residue is released from the protein backbone via cleavage of the C(alpha)-C(beta) bond, leaving a glycine in place of the original tyrosine residue. Reaction requires O(2) and a reduced dimetal cofactor. The polypeptide is 4-aminobenzoate synthase (Chlamydia pneumoniae (Chlamydophila pneumoniae)).